Reading from the N-terminus, the 465-residue chain is ATP synthase subunit beta 2 (465 aa).

148–155 (GGAGVGKT) contributes to the ATP binding site.

The protein belongs to the ATPase alpha/beta chains family. F-type ATPases have 2 components, CF(1) - the catalytic core - and CF(0) - the membrane proton channel. CF(1) has five subunits: alpha(3), beta(3), gamma(1), delta(1), epsilon(1). CF(0) has three main subunits: a(1), b(2) and c(9-12). The alpha and beta chains form an alternating ring which encloses part of the gamma chain. CF(1) is attached to CF(0) by a central stalk formed by the gamma and epsilon chains, while a peripheral stalk is formed by the delta and b chains.

It is found in the cell inner membrane. The enzyme catalyses ATP + H2O + 4 H(+)(in) = ADP + phosphate + 5 H(+)(out). Produces ATP from ADP in the presence of a proton gradient across the membrane. The catalytic sites are hosted primarily by the beta subunits. This Psychromonas ingrahamii (strain DSM 17664 / CCUG 51855 / 37) protein is ATP synthase subunit beta 2.